The sequence spans 309 residues: Clotting factor G beta subunit (309 aa).

Positions M1–R31 are cleaved as a signal peptide. 4 disulfides stabilise this stretch: C38–C158, C74–C90, C205–C227, and C238–C268. One can recognise a Peptidase S1 domain in the interval I47 to F292. H89 acts as the Charge relay system in catalysis. N-linked (GlcNAc...) asparagine glycosylation is present at N100. The active-site Charge relay system is D138. A glycan (N-linked (GlcNAc...) asparagine) is linked at N206. Catalysis depends on S242, which acts as the Charge relay system.

The protein belongs to the peptidase S1 family. Clotting factor G is a heterodimer composed of two non-covalently associated subunits, alpha and beta. Upon activation, converted to a two-chain active form linked by a disulfide bond. Forms a covalent heterodimer with intracellular coagulation inhibitor 3/LICI-3. As to expression, expressed in the hemocytes (at protein level).

It carries out the reaction Selective cleavage of 98-Arg-|-Ile-99 bond in Limulus proclotting enzyme to form active clotting enzyme.. With respect to regulation, binding to (1-&gt;3)-beta-D-glucan to alpha subunit, induces autocatalysis and activation of beta subunit. Inhibited by intracellular coagulation inhibitor 3/LICI-3 and to a lesser extend by intracellular coagulation inhibitor 2/LICI-2. Its function is as follows. Component of the heterodimer clotting factor G which may play a role in defense mechanisms against fungi. Initiates a (1-&gt;3)-beta-glucan-sensing clotting pathway whereby the alpha subunit binds to glucans containing (1-&gt;3)-beta linkages, which are components of the fungal cell wall, and the beta subunit catalyzes the activation of proclotting enzyme. The chain is Clotting factor G beta subunit from Tachypleus tridentatus (Japanese horseshoe crab).